Reading from the N-terminus, the 893-residue chain is Protein FAM186B (893 aa).

5 disordered regions span residues 177-207 (GWQG…TMNT), 327-376 (QAED…PSPM), 537-557 (LEKE…DVER), 574-611 (LSLV…QRPM), and 806-827 (KPKK…GPTY). Composition is skewed to polar residues over residues 179 to 188 (QGRSPQTSPS) and 197 to 207 (QMLQDQHTMNT). The stretch at 303–331 (RYHDLLLMKQALEFQLKKAQNATGQAEDL) forms a coiled coil. The span at 342 to 353 (SERETLPRKETV) shows a compositional bias: basic and acidic residues.

The protein belongs to the FAM186 family.

This Homo sapiens (Human) protein is Protein FAM186B (FAM186B).